Reading from the N-terminus, the 360-residue chain is Phospho-N-acetylmuramoyl-pentapeptide-transferase (360 aa).

A run of 10 helical transmembrane segments spans residues 18 to 38 (VFSY…MMSL), 73 to 93 (TMGG…WADL), 97 to 117 (YVWA…VDDY), 135 to 155 (FWQS…STQA), 168 to 188 (VLPQ…VGTS), 199 to 219 (GLAI…AYLT), 236 to 256 (ASEL…FLWF), 263 to 283 (VFMG…IAVL), 288 to 308 (LLLI…ILQV), and 339 to 359 (IVRF…TLKI).

Belongs to the glycosyltransferase 4 family. MraY subfamily. The cofactor is Mg(2+).

The protein localises to the cell inner membrane. The catalysed reaction is UDP-N-acetyl-alpha-D-muramoyl-L-alanyl-gamma-D-glutamyl-meso-2,6-diaminopimeloyl-D-alanyl-D-alanine + di-trans,octa-cis-undecaprenyl phosphate = di-trans,octa-cis-undecaprenyl diphospho-N-acetyl-alpha-D-muramoyl-L-alanyl-D-glutamyl-meso-2,6-diaminopimeloyl-D-alanyl-D-alanine + UMP. Its pathway is cell wall biogenesis; peptidoglycan biosynthesis. Functionally, catalyzes the initial step of the lipid cycle reactions in the biosynthesis of the cell wall peptidoglycan: transfers peptidoglycan precursor phospho-MurNAc-pentapeptide from UDP-MurNAc-pentapeptide onto the lipid carrier undecaprenyl phosphate, yielding undecaprenyl-pyrophosphoryl-MurNAc-pentapeptide, known as lipid I. The polypeptide is Phospho-N-acetylmuramoyl-pentapeptide-transferase (Pseudoalteromonas translucida (strain TAC 125)).